The chain runs to 192 residues: Xanthine phosphoribosyltransferase (192 aa).

Xanthine-binding residues include L20 and N27. 128–132 (ANGQA) contacts 5-phospho-alpha-D-ribose 1-diphosphate. Xanthine is bound at residue K156.

The protein belongs to the purine/pyrimidine phosphoribosyltransferase family. Xpt subfamily. In terms of assembly, homodimer.

It localises to the cytoplasm. It catalyses the reaction XMP + diphosphate = xanthine + 5-phospho-alpha-D-ribose 1-diphosphate. Its pathway is purine metabolism; XMP biosynthesis via salvage pathway; XMP from xanthine: step 1/1. In terms of biological role, converts the preformed base xanthine, a product of nucleic acid breakdown, to xanthosine 5'-monophosphate (XMP), so it can be reused for RNA or DNA synthesis. The protein is Xanthine phosphoribosyltransferase of Lacticaseibacillus casei (strain BL23) (Lactobacillus casei).